A 516-amino-acid chain; its full sequence is Replication factor C large subunit (516 aa).

44 to 51 serves as a coordination point for ATP; the sequence is GAPGVGKT. The tract at residues 421 to 516 is disordered; it reads RSEAVEAHAG…DGQAGLSEFM (96 aa). A compositionally biased stretch (basic and acidic residues) spans 454–467; the sequence is VQSHKSAESGDDTV. Residues 479–496 are compositionally biased toward low complexity; that stretch reads QSGASETASATESASDSD. The segment covering 497-508 has biased composition (acidic residues); that stretch reads ASTDTDADDDDG.

It belongs to the activator 1 small subunits family. RfcL subfamily. Heteromultimer composed of small subunits (RfcS) and large subunits (RfcL).

Functionally, part of the RFC clamp loader complex which loads the PCNA sliding clamp onto DNA. This chain is Replication factor C large subunit, found in Haloquadratum walsbyi (strain DSM 16790 / HBSQ001).